The chain runs to 271 residues: N-acetylaspartate synthetase (271 aa).

Residues 1 to 38 (MTYRGTRKSPCCSPPPRCGPPLPSGPAGSALGPPSSGA) form a disordered region. The span at 12–24 (CSPPPRCGPPLPS) shows a compositional bias: pro residues. Over residues 25 to 37 (GPAGSALGPPSSG) the composition is skewed to low complexity. Residues 89-109 (VYAVIIIMCFVVTKSLLVTCC) form a helical membrane-spanning segment. The N-acetyltransferase domain occupies 115–258 (LGMRYYYSRK…HSLLERLFFQ (144 aa)).

Belongs to the NAT8 family.

Its subcellular location is the cytoplasm. It is found in the microsome membrane. The protein localises to the mitochondrion membrane. It localises to the endoplasmic reticulum membrane. It catalyses the reaction L-aspartate + acetyl-CoA = N-acetyl-L-aspartate + CoA + H(+). In terms of biological role, catalyzes the synthesis of N-acetylaspartate acid (NAA) from L-aspartate and acetyl-CoA. This is N-acetylaspartate synthetase (nat8l) from Xenopus tropicalis (Western clawed frog).